A 503-amino-acid chain; its full sequence is Glutamate--tRNA ligase (503 aa).

The 'HIGH' region signature appears at 15 to 25; that stretch reads PSPTGYLHVGG. The 'KMSKS' region motif lies at 262 to 266; sequence KLSKR. K265 serves as a coordination point for ATP.

This sequence belongs to the class-I aminoacyl-tRNA synthetase family. Glutamate--tRNA ligase type 1 subfamily. Monomer.

It is found in the cytoplasm. The enzyme catalyses tRNA(Glu) + L-glutamate + ATP = L-glutamyl-tRNA(Glu) + AMP + diphosphate. Catalyzes the attachment of glutamate to tRNA(Glu) in a two-step reaction: glutamate is first activated by ATP to form Glu-AMP and then transferred to the acceptor end of tRNA(Glu). This chain is Glutamate--tRNA ligase, found in Prosthecochloris aestuarii (strain DSM 271 / SK 413).